Here is a 794-residue protein sequence, read N- to C-terminus: Cilia- and flagella-associated protein 184 (794 aa).

Disordered regions lie at residues 1-105 and 386-458; these read MASE…VNSE and AHEE…QQDT. Over residues 24-35 the composition is skewed to low complexity; the sequence is QMQQYMMEMQRQ. Positions 49-69 are enriched in acidic residues; that stretch reads EGYEEGQEGEGYGEEYGDQDY. 3 stretches are compositionally biased toward basic and acidic residues: residues 89 to 103, 386 to 411, and 431 to 445; these read QVNE…RRVN, AHEE…KDYG, and ISDK…HAEQ. The segment covering 446–456 has biased composition (low complexity); that stretch reads EQNQQAAQQQQ. 2 coiled-coil regions span residues 461–613 and 638–775; these read NKEI…LRLR and FEQL…ANQI. The span at 774 to 787 shows a compositional bias: polar residues; the sequence is QISTQNMQSQNNSL. A disordered region spans residues 774–794; sequence QISTQNMQSQNNSLKKPYQPY.

It belongs to the CFAP184 family. Forms a complex with CFAP263; the interaction is required for functional activity in cilia.

The protein localises to the cell projection. It is found in the cilium. Its function is as follows. In complex with CFAP263, acts as a regulator of ciliary beating that connects radial spoke 3 (RS3) to the inner dynein arm (IDA) and the nexin-dynein regulatory complex (N-DRC). The complex is positioned parallel to N-DRC and forms a connection between the arch at the base of RS3, the IDA tail and N-DRC. The chain is Cilia- and flagella-associated protein 184 (CFAP184) from Tetrahymena thermophila (strain SB210).